Reading from the N-terminus, the 565-residue chain is Alkaline nuclease (565 aa).

The protein belongs to the herpesviridae alkaline nuclease family. Interacts with major DNA-binding protein; this interaction increases the nuclease processivity of the alkaline exonuclease.

The protein localises to the host nucleus. It is found in the host cytoplasm. Functionally, plays a role in processing non linear or branched viral DNA intermediates in order to promote the production of mature packaged unit-length linear progeny viral DNA molecules. Exhibits endonuclease and exonuclease activities and accepts both double-stranded and single-stranded DNA as substrate. Exonuclease digestion of DNA is in the 5'-&gt; 3' direction and the products are 5'-monophosphate nucleosides. Additionally, forms a recombinase with the major DNA-binding protein, which displays strand exchange activity. This chain is Alkaline nuclease, found in Equine herpesvirus 1 (strain V592) (EHV-1).